The primary structure comprises 473 residues: Sulfate adenylyltransferase subunit 1 (473 aa).

One can recognise a tr-type G domain in the interval 19-238 (KTLLKFLTCG…IKIKNSISSE (220 aa)). The G1 stretch occupies residues 28-35 (GSVDDGKS). GTP is bound at residue 28-35 (GSVDDGKS). The interval 86–90 (GITID) is G2. The segment at 107-110 (DTPG) is G3. GTP is bound by residues 107–111 (DTPGH) and 162–165 (NKMD). The segment at 162–165 (NKMD) is G4. The segment at 200–202 (SAL) is G5.

It belongs to the TRAFAC class translation factor GTPase superfamily. Classic translation factor GTPase family. CysN/NodQ subfamily. In terms of assembly, heterodimer composed of CysD, the smaller subunit, and CysN.

It catalyses the reaction sulfate + ATP + H(+) = adenosine 5'-phosphosulfate + diphosphate. It functions in the pathway sulfur metabolism; hydrogen sulfide biosynthesis; sulfite from sulfate: step 1/3. Its function is as follows. With CysD forms the ATP sulfurylase (ATPS) that catalyzes the adenylation of sulfate producing adenosine 5'-phosphosulfate (APS) and diphosphate, the first enzymatic step in sulfur assimilation pathway. APS synthesis involves the formation of a high-energy phosphoric-sulfuric acid anhydride bond driven by GTP hydrolysis by CysN coupled to ATP hydrolysis by CysD. This chain is Sulfate adenylyltransferase subunit 1, found in Buchnera aphidicola subsp. Acyrthosiphon pisum (strain 5A).